The chain runs to 126 residues: Aspartate 1-decarboxylase (126 aa).

Ser-25 functions as the Schiff-base intermediate with substrate; via pyruvic acid in the catalytic mechanism. Residue Ser-25 is modified to Pyruvic acid (Ser). Thr-57 contributes to the substrate binding site. Tyr-58 functions as the Proton donor in the catalytic mechanism. 73 to 75 provides a ligand contact to substrate; the sequence is GAA.

This sequence belongs to the PanD family. Heterooctamer of four alpha and four beta subunits. It depends on pyruvate as a cofactor. Is synthesized initially as an inactive proenzyme, which is activated by self-cleavage at a specific serine bond to produce a beta-subunit with a hydroxyl group at its C-terminus and an alpha-subunit with a pyruvoyl group at its N-terminus.

It is found in the cytoplasm. It carries out the reaction L-aspartate + H(+) = beta-alanine + CO2. The protein operates within cofactor biosynthesis; (R)-pantothenate biosynthesis; beta-alanine from L-aspartate: step 1/1. Its function is as follows. Catalyzes the pyruvoyl-dependent decarboxylation of aspartate to produce beta-alanine. The polypeptide is Aspartate 1-decarboxylase (Cronobacter sakazakii (strain ATCC BAA-894) (Enterobacter sakazakii)).